The chain runs to 205 residues: Macrophage immunometabolism regulator (205 aa).

The segment at methionine 1 to serine 40 is disordered. Over residues valine 8–serine 25 the composition is skewed to polar residues.

The protein belongs to the UNC119-binding protein family. In terms of assembly, interacts with unc119 family proteins; interaction preferentially takes place when unc119 proteins are unliganded with myristoylated proteins.

It localises to the cytoplasm. The protein localises to the cell projection. The protein resides in the cilium. Its function is as follows. May play a role in immune regulation through regulation of the macrophage function. May also play a role in trafficking of proteins via its interaction with unc119 family cargo adapters. May play a role in ciliary membrane localization. The chain is Macrophage immunometabolism regulator (macir) from Xenopus laevis (African clawed frog).